Consider the following 157-residue polypeptide: ATP synthase subunit b (157 aa).

Residues 7-27 form a helical membrane-spanning segment; that stretch reads LIAQLVVFFILAWVTMKFVWP.

It belongs to the ATPase B chain family. As to quaternary structure, F-type ATPases have 2 components, F(1) - the catalytic core - and F(0) - the membrane proton channel. F(1) has five subunits: alpha(3), beta(3), gamma(1), delta(1), epsilon(1). F(0) has three main subunits: a(1), b(2) and c(10-14). The alpha and beta chains form an alternating ring which encloses part of the gamma chain. F(1) is attached to F(0) by a central stalk formed by the gamma and epsilon chains, while a peripheral stalk is formed by the delta and b chains.

The protein localises to the cell inner membrane. Functionally, f(1)F(0) ATP synthase produces ATP from ADP in the presence of a proton or sodium gradient. F-type ATPases consist of two structural domains, F(1) containing the extramembraneous catalytic core and F(0) containing the membrane proton channel, linked together by a central stalk and a peripheral stalk. During catalysis, ATP synthesis in the catalytic domain of F(1) is coupled via a rotary mechanism of the central stalk subunits to proton translocation. In terms of biological role, component of the F(0) channel, it forms part of the peripheral stalk, linking F(1) to F(0). The chain is ATP synthase subunit b from Aromatoleum aromaticum (strain DSM 19018 / LMG 30748 / EbN1) (Azoarcus sp. (strain EbN1)).